The chain runs to 341 residues: LIM and senescent cell antigen-like-containing domain protein 2 (341 aa).

LIM zinc-binding domains lie at 13–74 (AVCQ…LFAP), 76–133 (CGSC…EKAK), 138–195 (YICQ…KMGV), 196–255 (PICG…LFGD), and 256–315 (VCYN…FPLE). Position 22 is a phosphoserine (F22). A Phosphothreonine modification is found at T327. Position 328 is a phosphoserine (S328).

As to quaternary structure, interacts with TGFB1I1. Interacts with integrin-linked protein kinase 1 (ILK) via the first LIM domain, and in competition with LIMS1. Part of the heterotrimeric IPP complex composed of integrin-linked kinase (ILK), LIMS1 or LIMS2, and PARVA.

It localises to the nucleus. The protein localises to the cell junction. The protein resides in the focal adhesion. Its subcellular location is the cell membrane. Functionally, adapter protein in a cytoplasmic complex linking beta-integrins to the actin cytoskeleton, bridges the complex to cell surface receptor tyrosine kinases and growth factor receptors. Plays a role in modulating cell spreading and migration. The sequence is that of LIM and senescent cell antigen-like-containing domain protein 2 (LIMS2) from Homo sapiens (Human).